The sequence spans 301 residues: Glycine--tRNA ligase alpha subunit (301 aa).

It belongs to the class-II aminoacyl-tRNA synthetase family. In terms of assembly, tetramer of two alpha and two beta subunits.

The protein resides in the cytoplasm. It catalyses the reaction tRNA(Gly) + glycine + ATP = glycyl-tRNA(Gly) + AMP + diphosphate. The sequence is that of Glycine--tRNA ligase alpha subunit from Proteus mirabilis (strain HI4320).